Here is a 218-residue protein sequence, read N- to C-terminus: Superoxide dismutase [Mn] 2, mitochondrial (218 aa).

The transit peptide at 1 to 24 (MLQSTARTASKLVQPVAGVLAVRS) directs the protein to the mitochondrion. Mn(2+)-binding residues include histidine 50, histidine 98, aspartate 179, and histidine 183.

This sequence belongs to the iron/manganese superoxide dismutase family. Homotetramer. Mn(2+) serves as cofactor. In terms of tissue distribution, expressed in pharynx and rectum. Upon thermal stress, expressed in vulva, body wall muscles and hypodermis.

The protein localises to the mitochondrion. The catalysed reaction is 2 superoxide + 2 H(+) = H2O2 + O2. Its function is as follows. Destroys superoxide anion radicals which are normally produced within the cells and which are toxic to biological systems. In Caenorhabditis elegans, this protein is Superoxide dismutase [Mn] 2, mitochondrial (sod-3).